We begin with the raw amino-acid sequence, 159 residues long: Ribosomal RNA large subunit methyltransferase H (159 aa).

Residues Leu76, Gly108, and Phe127–Leu132 contribute to the S-adenosyl-L-methionine site.

Belongs to the RNA methyltransferase RlmH family. In terms of assembly, homodimer.

The protein localises to the cytoplasm. The enzyme catalyses pseudouridine(1915) in 23S rRNA + S-adenosyl-L-methionine = N(3)-methylpseudouridine(1915) in 23S rRNA + S-adenosyl-L-homocysteine + H(+). Specifically methylates the pseudouridine at position 1915 (m3Psi1915) in 23S rRNA. This chain is Ribosomal RNA large subunit methyltransferase H, found in Streptococcus mutans serotype c (strain ATCC 700610 / UA159).